Here is a 428-residue protein sequence, read N- to C-terminus: Kynureninase (428 aa).

Residues Thr-104, Thr-105, 132–135, Asp-213, His-216, and Tyr-238 contribute to the pyridoxal 5'-phosphate site; that span reads FPSD. At Lys-239 the chain carries N6-(pyridoxal phosphate)lysine. Residues Trp-267 and Thr-295 each coordinate pyridoxal 5'-phosphate.

Belongs to the kynureninase family. In terms of assembly, homodimer. The cofactor is pyridoxal 5'-phosphate.

The catalysed reaction is L-kynurenine + H2O = anthranilate + L-alanine + H(+). It carries out the reaction 3-hydroxy-L-kynurenine + H2O = 3-hydroxyanthranilate + L-alanine + H(+). It functions in the pathway amino-acid degradation; L-kynurenine degradation; L-alanine and anthranilate from L-kynurenine: step 1/1. The protein operates within cofactor biosynthesis; NAD(+) biosynthesis; quinolinate from L-kynurenine: step 2/3. Functionally, catalyzes the cleavage of L-kynurenine (L-Kyn) and L-3-hydroxykynurenine (L-3OHKyn) into anthranilic acid (AA) and 3-hydroxyanthranilic acid (3-OHAA), respectively. The chain is Kynureninase from Bacillus mycoides (strain KBAB4) (Bacillus weihenstephanensis).